The chain runs to 216 residues: Ras-like protein (216 aa).

GTP is bound at residue 16-23 (GGGGVGKS). An Effector region motif is present at residues 38 to 46 (YDPTIEDSY). Residues 63–67 (DTAGQ) and 122–125 (NKCD) contribute to the GTP site. 2 S-palmitoyl cysteine lipidation sites follow: Cys209 and Cys210. Residue Cys213 is modified to Cysteine methyl ester. The S-geranylgeranyl cysteine moiety is linked to residue Cys213. Positions 214–216 (VVL) are cleaved as a propeptide — removed in mature form.

Belongs to the small GTPase superfamily. Ras family.

The protein resides in the cell membrane. The enzyme catalyses GTP + H2O = GDP + phosphate + H(+). Alternates between an inactive form bound to GDP and an active form bound to GTP. Activated by a guanine nucleotide-exchange factor (GEF) and inactivated by a GTPase-activating protein (GAP). This is Ras-like protein (RAS1) from Cryptococcus neoformans var. neoformans serotype D (strain B-3501A) (Filobasidiella neoformans).